The following is a 184-amino-acid chain: Holliday junction branch migration complex subunit RuvA (184 aa).

The segment at Met1–Ala61 is domain I. Residues Asp62–Gln135 are domain II. A region of interest (flexible linker) is located at residue Gln135. A domain III region spans residues Gln135 to Lys184.

The protein belongs to the RuvA family. As to quaternary structure, homotetramer. Forms an RuvA(8)-RuvB(12)-Holliday junction (HJ) complex. HJ DNA is sandwiched between 2 RuvA tetramers; dsDNA enters through RuvA and exits via RuvB. An RuvB hexamer assembles on each DNA strand where it exits the tetramer. Each RuvB hexamer is contacted by two RuvA subunits (via domain III) on 2 adjacent RuvB subunits; this complex drives branch migration. In the full resolvosome a probable DNA-RuvA(4)-RuvB(12)-RuvC(2) complex forms which resolves the HJ.

The protein localises to the cytoplasm. Its function is as follows. The RuvA-RuvB-RuvC complex processes Holliday junction (HJ) DNA during genetic recombination and DNA repair, while the RuvA-RuvB complex plays an important role in the rescue of blocked DNA replication forks via replication fork reversal (RFR). RuvA specifically binds to HJ cruciform DNA, conferring on it an open structure. The RuvB hexamer acts as an ATP-dependent pump, pulling dsDNA into and through the RuvAB complex. HJ branch migration allows RuvC to scan DNA until it finds its consensus sequence, where it cleaves and resolves the cruciform DNA. This chain is Holliday junction branch migration complex subunit RuvA, found in Nautilia profundicola (strain ATCC BAA-1463 / DSM 18972 / AmH).